Consider the following 346-residue polypeptide: MAELFREVTKEERVLYYKAEWNAKKLPRFLVEKLENREFGFDHTGEGPSDRKNVFMDVRDLEDYIKATAPYAIYSSVALYEDPKGMSGWLGAELVFDIDAKDLPLRRCGHIHEHGKVCPICLGDAKELARDTLVILKEDFGFEDVHVVYSGRGYHIRVLDDWAIQLDSKSREKILAYISAAEEVTFEDIQSRKIMLSSGYFRVFRLRFGYFIARANENHLLNIGLRKGQVKKILESRDEIYEGFVRKGLLTAFPQGIGYKTLARLFALSSTFSKAYFDGRVTVDVKRILRVPSSLHSKVGLVATYIGSDERKLEKFNPFRDAVPKFREEEVKEAYEEWLELHGDEL.

Residues Asp-97, Asp-99, and Asp-278 contribute to the active site.

Belongs to the eukaryotic-type primase small subunit family. In terms of assembly, heterodimer of a small subunit (PriS) and a large subunit (PriL). It depends on Mg(2+) as a cofactor. Mn(2+) serves as cofactor.

Catalytic subunit of DNA primase, an RNA polymerase that catalyzes the synthesis of short RNA molecules used as primers for DNA polymerase during DNA replication. The small subunit contains the primase catalytic core and has DNA synthesis activity on its own. Binding to the large subunit stabilizes and modulates the activity, increasing the rate of DNA synthesis while decreasing the length of the DNA fragments, and conferring RNA synthesis capability. The DNA polymerase activity may enable DNA primase to also catalyze primer extension after primer synthesis. May also play a role in DNA repair. This chain is DNA primase small subunit PriS, found in Thermococcus onnurineus (strain NA1).